A 286-amino-acid chain; its full sequence is Pyridoxal kinase PdxY (286 aa).

Residues S9 and 44–45 (TQ) contribute to the substrate site. Residues D111, A143, E148, K181, and 208 to 211 (RPLV) each bind ATP. Residue D223 coordinates substrate.

It belongs to the pyridoxine kinase family. PdxY subfamily. As to quaternary structure, homodimer. Requires Mg(2+) as cofactor.

It catalyses the reaction pyridoxal + ATP = pyridoxal 5'-phosphate + ADP + H(+). It participates in cofactor metabolism; pyridoxal 5'-phosphate salvage; pyridoxal 5'-phosphate from pyridoxal: step 1/1. In terms of biological role, pyridoxal kinase involved in the salvage pathway of pyridoxal 5'-phosphate (PLP). Catalyzes the phosphorylation of pyridoxal to PLP. This Salmonella choleraesuis (strain SC-B67) protein is Pyridoxal kinase PdxY.